Reading from the N-terminus, the 1447-residue chain is Baculoviral IAP repeat-containing protein 1b (1447 aa).

3 BIR repeats span residues 60 to 127 (EAKR…CEFL), 159 to 227 (EEAR…CEFL), and 278 to 345 (EELR…CVFL). Residues Cys-315, Cys-318, His-335, and Cys-342 each contribute to the Zn(2+) site. The NACHT domain maps to 508–802 (SVMCVEGEAG…EFLAAVRLTE (295 aa)). Lys-520 lines the ATP pocket.

As to quaternary structure, component of the NLRC4 inflammasome, at least composed of NLRC4, caspase-1 (CASP1) and some NAIP protein. Interacts with S.typhimurium (Salmonella) PrgJ and B.thailandensis BsaK.

Its function is as follows. Sensor component of the NLRC4 inflammasome that specifically recognizes and binds type III secretion system (T3SS) rod proteins such as S.typhimurium (Salmonella) PrgJ and B.thailandensis BsaK from pathogenic bacteria. Association of pathogenic bacteria proteins drives in turn drive assembly and activation of the NLRC4 inflammasome, promoting caspase-1 activation, cytokine production and macrophage pyroptosis. The NLRC4 inflammasome is activated as part of the innate immune response to a range of intracellular bacteria. The NLRC4 inflammasome senses Gram-negative bacteria such as L.pneumophila and P.aeruginosa, enteric pathogens S.typhimurium (Salmonella) and S.flexneri. Prevents motor-neuron apoptosis induced by a variety of signals. In Mus musculus (Mouse), this protein is Baculoviral IAP repeat-containing protein 1b (Naip2).